Reading from the N-terminus, the 419-residue chain is 3-isopropylmalate dehydratase large subunit (419 aa).

[4Fe-4S] cluster is bound by residues Cys302, Cys362, and Cys365.

It belongs to the aconitase/IPM isomerase family. LeuC type 2 subfamily. As to quaternary structure, heterodimer of LeuC and LeuD. It depends on [4Fe-4S] cluster as a cofactor.

It catalyses the reaction (2R,3S)-3-isopropylmalate = (2S)-2-isopropylmalate. The protein operates within amino-acid biosynthesis; L-leucine biosynthesis; L-leucine from 3-methyl-2-oxobutanoate: step 2/4. Catalyzes the isomerization between 2-isopropylmalate and 3-isopropylmalate, via the formation of 2-isopropylmaleate. This is 3-isopropylmalate dehydratase large subunit from Sulfurimonas denitrificans (strain ATCC 33889 / DSM 1251) (Thiomicrospira denitrificans (strain ATCC 33889 / DSM 1251)).